The chain runs to 68 residues: Protein RH1 (68 aa).

This Pantherophis guttatus (Corn snake) protein is Protein RH1.